The sequence spans 277 residues: NLP effector protein Pc109095 (277 aa).

A signal peptide spans 1-19 (MKFIFAFVLCLAVAQTALG). A Hepta-peptide GHRHDWE motif motif is present at residues 119–125 (RSRHLWA). Residue Asn-199 is glycosylated (N-linked (GlcNAc...) asparagine).

It belongs to the Necrosis inducing protein (NPP1) family.

The protein localises to the secreted. Secreted effector that contributes strongly to virulence during infection by P.capsici. This chain is NLP effector protein Pc109095, found in Phytophthora capsici.